The chain runs to 251 residues: uncharacterized protein (251 aa).

The N-terminal stretch at 1–18 (MKILIILSIILCSLFGRA) is a signal peptide.

Belongs to the MlaA family.

This is an uncharacterized protein from Rickettsia prowazekii (strain Madrid E).